The sequence spans 102 residues: PE family immunomodulator PE15 (102 aa).

The PE domain occupies 3–91; the sequence is LRVVPESLAG…SGASYAARDA (89 aa).

It belongs to the mycobacterial PE family.

The protein localises to the secreted. It is found in the cell envelope. It localises to the cell surface. Functionally, may play a pivotal role in the evasion of host immune response by M.tuberculosis. Mediates production of IL-10 via activation of the p38 and ERK1/2 mitogen-activated protein kinase (MAPK) signaling pathways. The sequence is that of PE family immunomodulator PE15 (PE15) from Mycobacterium tuberculosis (strain CDC 1551 / Oshkosh).